The sequence spans 378 residues: 3-dehydroquinate synthase (378 aa).

Residues 115–119, 139–140, lysine 152, and lysine 161 each bind NAD(+); these read GVVGD and TS. Residues glutamate 194, histidine 256, and histidine 275 each contribute to the Zn(2+) site.

It belongs to the sugar phosphate cyclases superfamily. Dehydroquinate synthase family. Requires Co(2+) as cofactor. It depends on Zn(2+) as a cofactor. The cofactor is NAD(+).

The protein localises to the cytoplasm. It carries out the reaction 7-phospho-2-dehydro-3-deoxy-D-arabino-heptonate = 3-dehydroquinate + phosphate. The protein operates within metabolic intermediate biosynthesis; chorismate biosynthesis; chorismate from D-erythrose 4-phosphate and phosphoenolpyruvate: step 2/7. Functionally, catalyzes the conversion of 3-deoxy-D-arabino-heptulosonate 7-phosphate (DAHP) to dehydroquinate (DHQ). In Brucella suis (strain ATCC 23445 / NCTC 10510), this protein is 3-dehydroquinate synthase.